We begin with the raw amino-acid sequence, 147 residues long: Transcription antitermination protein NusB (147 aa).

The protein belongs to the NusB family.

Its function is as follows. Involved in transcription antitermination. Required for transcription of ribosomal RNA (rRNA) genes. Binds specifically to the boxA antiterminator sequence of the ribosomal RNA (rrn) operons. The sequence is that of Transcription antitermination protein NusB from Teredinibacter turnerae (strain ATCC 39867 / T7901).